A 101-amino-acid chain; its full sequence is Gamma-secretase subunit PEN-2 (101 aa).

Residues Met-1–Lys-17 are Cytoplasmic-facing. An intramembrane region (helical) is located at residues Tyr-18–Trp-36. At Phe-37–Val-57 the chain is on the cytoplasmic side. Residues Trp-58–Phe-78 form a helical membrane-spanning segment. Topologically, residues Gln-79–Pro-101 are lumenal.

This sequence belongs to the PEN-2 family. The functional gamma-secretase complex is composed of at least four polypeptides: a presenilin homodimer (PSEN1 or PSEN2), nicastrin (NCSTN), APH1 (APH1A or APH1B) and PSENEN. As to expression, widely expressed. Expressed in leukocytes, lung, placenta, small intestine, liver, kidney, spleen thymus, skeletal muscle, heart and brain.

The protein localises to the endoplasmic reticulum membrane. It is found in the golgi apparatus. Its subcellular location is the golgi stack membrane. The protein resides in the cell membrane. It localises to the membrane. Essential subunit of the gamma-secretase complex, an endoprotease complex that catalyzes the intramembrane cleavage of integral membrane proteins such as Notch receptors and APP (amyloid-beta precursor protein). The gamma-secretase complex plays a role in Notch and Wnt signaling cascades and regulation of downstream processes via its role in processing key regulatory proteins, and by regulating cytosolic CTNNB1 levels. PSENEN modulates both endoproteolysis of presenilin and gamma-secretase activity. This is Gamma-secretase subunit PEN-2 (PSENEN) from Homo sapiens (Human).